A 264-amino-acid polypeptide reads, in one-letter code: 3-methyl-2-oxobutanoate hydroxymethyltransferase (264 aa).

Asp-45 and Asp-84 together coordinate Mg(2+). Residues Asp-45 to Ser-46, Asp-84, and Lys-112 contribute to the 3-methyl-2-oxobutanoate site. Glu-114 is a Mg(2+) binding site. The active-site Proton acceptor is the Glu-181.

It belongs to the PanB family. As to quaternary structure, homodecamer; pentamer of dimers. Mg(2+) serves as cofactor.

Its subcellular location is the cytoplasm. It carries out the reaction 3-methyl-2-oxobutanoate + (6R)-5,10-methylene-5,6,7,8-tetrahydrofolate + H2O = 2-dehydropantoate + (6S)-5,6,7,8-tetrahydrofolate. Its pathway is cofactor biosynthesis; (R)-pantothenate biosynthesis; (R)-pantoate from 3-methyl-2-oxobutanoate: step 1/2. In terms of biological role, catalyzes the reversible reaction in which hydroxymethyl group from 5,10-methylenetetrahydrofolate is transferred onto alpha-ketoisovalerate to form ketopantoate. This chain is 3-methyl-2-oxobutanoate hydroxymethyltransferase, found in Escherichia coli O8 (strain IAI1).